Here is a 113-residue protein sequence, read N- to C-terminus: T cell receptor alpha variable 8-3 (113 aa).

An N-terminal signal peptide occupies residues 1–20 (MLLELIPLLGIHFVLRTARA). The region spanning 21-113 (QSVTQPDIHI…DAAEYFCAVG (93 aa)) is the Ig-like domain. Residues C42 and C110 are joined by a disulfide bond. Residue N43 is glycosylated (N-linked (GlcNAc...) asparagine).

Alpha-beta TR is a heterodimer composed of an alpha and beta chain; disulfide-linked. The alpha-beta TR is associated with the transmembrane signaling CD3 coreceptor proteins to form the TR-CD3 (TcR or TCR). The assembly of alpha-beta TR heterodimers with CD3 occurs in the endoplasmic reticulum where a single alpha-beta TR heterodimer associates with one CD3D-CD3E heterodimer, one CD3G-CD3E heterodimer and one CD247 homodimer forming a stable octameric structure. CD3D-CD3E and CD3G-CD3E heterodimers preferentially associate with TR alpha and TR beta chains, respectively. The association of the CD247 homodimer is the last step of TcR assembly in the endoplasmic reticulum and is required for transport to the cell surface.

The protein resides in the cell membrane. In terms of biological role, v region of the variable domain of T cell receptor (TR) alpha chain that participates in the antigen recognition. Alpha-beta T cell receptors are antigen specific receptors which are essential to the immune response and are present on the cell surface of T lymphocytes. Recognize peptide-major histocompatibility (MH) (pMH) complexes that are displayed by antigen presenting cells (APC), a prerequisite for efficient T cell adaptive immunity against pathogens. Binding of alpha-beta TR to pMH complex initiates TR-CD3 clustering on the cell surface and intracellular activation of LCK that phosphorylates the ITAM motifs of CD3G, CD3D, CD3E and CD247 enabling the recruitment of ZAP70. In turn ZAP70 phosphorylates LAT, which recruits numerous signaling molecules to form the LAT signalosome. The LAT signalosome propagates signal branching to three major signaling pathways, the calcium, the mitogen-activated protein kinase (MAPK) kinase and the nuclear factor NF-kappa-B (NF-kB) pathways, leading to the mobilization of transcription factors that are critical for gene expression and essential for T cell growth and differentiation. The T cell repertoire is generated in the thymus, by V-(D)-J rearrangement. This repertoire is then shaped by intrathymic selection events to generate a peripheral T cell pool of self-MH restricted, non-autoaggressive T cells. Post-thymic interaction of alpha-beta TR with the pMH complexes shapes TR structural and functional avidity. This Homo sapiens (Human) protein is T cell receptor alpha variable 8-3.